Consider the following 248-residue polypeptide: Chitin deacetylase (248 aa).

The N-terminal stretch at 1-26 is a signal peptide; that stretch reads MHFSTLFGAAATAALAGSTNASPLAR. 2 disulfide bridges follow: Cys38/Cys237 and Cys148/Cys152. Residues 42–232 enclose the NodB homology domain; it reads GLVALTYDDG…TLKSKGYRAV (191 aa). Catalysis depends on Asp49, which acts as the Proton acceptor. Asp49 provides a ligand contact to acetate. Co(2+)-binding residues include Asp50, His104, and His108. An acetate-binding site is contributed by Tyr145. The active-site Proton donor is the His206.

Belongs to the polysaccharide deacetylase family. As to quaternary structure, monomer. Co(2+) serves as cofactor. N-glycosylated.

It localises to the secreted. The catalysed reaction is [(1-&gt;4)-N-acetyl-beta-D-glucosaminyl](n) + n H2O = chitosan + n acetate. Its function is as follows. Hydrolyzes the N-acetamido groups of N-acetyl-D-glucosamine polymers in chitin to form chitosan and acetate. May play a role in evasion of the host immune response; plant chitinases liberate chitin molecules from the fungal cell wall which act as elicitors of the plant immune response, deacetylation of the liberated chitin neutralizes elicitor activity. This chain is Chitin deacetylase, found in Colletotrichum lindemuthianum (Bean anthracnose fungus).